A 162-amino-acid polypeptide reads, in one-letter code: NADH-quinone oxidoreductase subunit I (162 aa).

4Fe-4S ferredoxin-type domains follow at residues 52 to 82 (LRRY…IEAG) and 93 to 122 (VRYD…EGPN). [4Fe-4S] cluster is bound by residues cysteine 62, cysteine 65, cysteine 68, cysteine 72, cysteine 102, cysteine 105, cysteine 108, and cysteine 112.

It belongs to the complex I 23 kDa subunit family. In terms of assembly, NDH-1 is composed of 14 different subunits. Subunits NuoA, H, J, K, L, M, N constitute the membrane sector of the complex. [4Fe-4S] cluster serves as cofactor.

It localises to the cell inner membrane. The catalysed reaction is a quinone + NADH + 5 H(+)(in) = a quinol + NAD(+) + 4 H(+)(out). In terms of biological role, NDH-1 shuttles electrons from NADH, via FMN and iron-sulfur (Fe-S) centers, to quinones in the respiratory chain. The immediate electron acceptor for the enzyme in this species is believed to be ubiquinone. Couples the redox reaction to proton translocation (for every two electrons transferred, four hydrogen ions are translocated across the cytoplasmic membrane), and thus conserves the redox energy in a proton gradient. In Afipia carboxidovorans (strain ATCC 49405 / DSM 1227 / KCTC 32145 / OM5) (Oligotropha carboxidovorans), this protein is NADH-quinone oxidoreductase subunit I.